The following is a 339-amino-acid chain: Glycerol-3-phosphate dehydrogenase [NAD(P)+] (339 aa).

Positions 11, 12, and 109 each coordinate NADPH. Residues Lys-109, Gly-140, and Ser-142 each contribute to the sn-glycerol 3-phosphate site. Residue Ala-144 participates in NADPH binding. Sn-glycerol 3-phosphate-binding residues include Lys-195, Asp-249, Ser-259, Arg-260, and Asn-261. Catalysis depends on Lys-195, which acts as the Proton acceptor. Arg-260 lines the NADPH pocket. Residues Val-284 and Glu-286 each contribute to the NADPH site.

Belongs to the NAD-dependent glycerol-3-phosphate dehydrogenase family.

It localises to the cytoplasm. The catalysed reaction is sn-glycerol 3-phosphate + NAD(+) = dihydroxyacetone phosphate + NADH + H(+). It carries out the reaction sn-glycerol 3-phosphate + NADP(+) = dihydroxyacetone phosphate + NADPH + H(+). Its pathway is membrane lipid metabolism; glycerophospholipid metabolism. Its function is as follows. Catalyzes the reduction of the glycolytic intermediate dihydroxyacetone phosphate (DHAP) to sn-glycerol 3-phosphate (G3P), the key precursor for phospholipid synthesis. The sequence is that of Glycerol-3-phosphate dehydrogenase [NAD(P)+] from Lactobacillus johnsonii (strain CNCM I-12250 / La1 / NCC 533).